The primary structure comprises 442 residues: Trigger factor (442 aa).

A PPIase FKBP-type domain is found at 165–250 (DDRVIIDFEG…LQKVMAPELP (86 aa)).

Belongs to the FKBP-type PPIase family. Tig subfamily.

It is found in the cytoplasm. The enzyme catalyses [protein]-peptidylproline (omega=180) = [protein]-peptidylproline (omega=0). Functionally, involved in protein export. Acts as a chaperone by maintaining the newly synthesized protein in an open conformation. Functions as a peptidyl-prolyl cis-trans isomerase. The protein is Trigger factor of Coxiella burnetii (strain CbuG_Q212) (Coxiella burnetii (strain Q212)).